Consider the following 429-residue polypeptide: Bifunctional protein GlmU (429 aa).

Positions 1 to 223 are pyrophosphorylase; sequence MKTSILILAA…EDEFMGINDK (223 aa). Residues 8 to 11, Lys-22, Gln-74, and 81 to 82 each bind UDP-N-acetyl-alpha-D-glucosamine; these read LAAG and GT. Residue Asp-102 coordinates Mg(2+). UDP-N-acetyl-alpha-D-glucosamine contacts are provided by Gly-135, Glu-149, Asn-164, and Asn-221. Asn-221 is a binding site for Mg(2+). The segment at 224–244 is linker; that stretch reads FELSIAENFMQEKIKKYWMQQ. Residues 245–429 are N-acetyltransferase; that stretch reads GVIFHLPQST…KNYYYKKFQK (185 aa). UDP-N-acetyl-alpha-D-glucosamine is bound by residues Arg-308 and Lys-325. His-336 serves as the catalytic Proton acceptor. The UDP-N-acetyl-alpha-D-glucosamine site is built by Tyr-339 and Asn-350. Residues 359–360, Ser-378, Ala-396, and Arg-413 contribute to the acetyl-CoA site; that span reads NY.

This sequence in the N-terminal section; belongs to the N-acetylglucosamine-1-phosphate uridyltransferase family. The protein in the C-terminal section; belongs to the transferase hexapeptide repeat family. Homotrimer. It depends on Mg(2+) as a cofactor.

It is found in the cytoplasm. The catalysed reaction is alpha-D-glucosamine 1-phosphate + acetyl-CoA = N-acetyl-alpha-D-glucosamine 1-phosphate + CoA + H(+). It catalyses the reaction N-acetyl-alpha-D-glucosamine 1-phosphate + UTP + H(+) = UDP-N-acetyl-alpha-D-glucosamine + diphosphate. It functions in the pathway nucleotide-sugar biosynthesis; UDP-N-acetyl-alpha-D-glucosamine biosynthesis; N-acetyl-alpha-D-glucosamine 1-phosphate from alpha-D-glucosamine 6-phosphate (route II): step 2/2. Its pathway is nucleotide-sugar biosynthesis; UDP-N-acetyl-alpha-D-glucosamine biosynthesis; UDP-N-acetyl-alpha-D-glucosamine from N-acetyl-alpha-D-glucosamine 1-phosphate: step 1/1. The protein operates within bacterial outer membrane biogenesis; LPS lipid A biosynthesis. Catalyzes the last two sequential reactions in the de novo biosynthetic pathway for UDP-N-acetylglucosamine (UDP-GlcNAc). The C-terminal domain catalyzes the transfer of acetyl group from acetyl coenzyme A to glucosamine-1-phosphate (GlcN-1-P) to produce N-acetylglucosamine-1-phosphate (GlcNAc-1-P), which is converted into UDP-GlcNAc by the transfer of uridine 5-monophosphate (from uridine 5-triphosphate), a reaction catalyzed by the N-terminal domain. The protein is Bifunctional protein GlmU of Campylobacter jejuni subsp. doylei (strain ATCC BAA-1458 / RM4099 / 269.97).